The chain runs to 77 residues: Large ribosomal subunit protein bL28 (77 aa).

The protein belongs to the bacterial ribosomal protein bL28 family.

In Karelsulcia muelleri (strain GWSS) (Sulcia muelleri), this protein is Large ribosomal subunit protein bL28.